We begin with the raw amino-acid sequence, 482 residues long: Glutamate synthase [NADPH] small chain (482 aa).

A 4Fe-4S ferredoxin-type domain is found at 39-72 (ERANEQANRCSQCGVPFCQVHCPVSNNIPDWLKL). 4 residues coordinate [4Fe-4S] cluster: C95, C99, C105, and C109.

In terms of assembly, aggregate of 4 catalytic active heterodimers, consisting of a large and a small subunit. [4Fe-4S] cluster serves as cofactor.

The catalysed reaction is 2 L-glutamate + NADP(+) = L-glutamine + 2-oxoglutarate + NADPH + H(+). Its pathway is amino-acid biosynthesis; L-glutamate biosynthesis via GLT pathway; L-glutamate from 2-oxoglutarate and L-glutamine (NADP(+) route): step 1/1. It participates in energy metabolism; nitrogen metabolism. This chain is Glutamate synthase [NADPH] small chain (gltD), found in Azospirillum brasilense.